The sequence spans 998 residues: Calcium-transporting ATPase 3, endoplasmic reticulum-type (998 aa).

Over Met-1 to Pro-48 the chain is Cytoplasmic. Residues Phe-49–Ala-69 traverse the membrane as a helical segment. At Ile-70 to Glu-89 the chain is on the lumenal side. The chain crosses the membrane as a helical span at residues Pro-90 to Thr-109. The Cytoplasmic portion of the chain corresponds to Asn-110–Leu-250. The chain crosses the membrane as a helical span at residues Asp-251–Val-270. The Lumenal portion of the chain corresponds to Val-271–Tyr-291. The chain crosses the membrane as a helical span at residues Phe-292 to Ala-309. The Ca(2+) site is built by Val-300, Ala-301, Ile-303, and Glu-305. The Cytoplasmic portion of the chain corresponds to Val-310–Thr-746. Asp-347 (4-aspartylphosphate intermediate) is an active-site residue. Mg(2+)-binding residues include Asp-692 and Asp-696. A helical transmembrane segment spans residues Lys-747–Val-766. Residues Asn-757 and Glu-760 each coordinate Ca(2+). The Lumenal portion of the chain corresponds to Ala-767–Leu-776. A helical transmembrane segment spans residues Ala-777–Gly-797. Residues Asn-785, Thr-788, and Asp-789 each coordinate Ca(2+). Over Phe-798–Val-817 the chain is Cytoplasmic. Residues Val-818–Gly-840 form a helical membrane-spanning segment. Over Phe-841–Ser-883 the chain is Lumenal. The helical transmembrane segment at Thr-884 to Ser-903 threads the bilayer. Residue Glu-894 coordinates Ca(2+). Residues Glu-904–Asn-916 are Cytoplasmic-facing. The helical transmembrane segment at Leu-917–Tyr-935 threads the bilayer. Residues Val-936–Trp-950 lie on the Lumenal side of the membrane. The chain crosses the membrane as a helical span at residues Ala-951–Lys-971. The Cytoplasmic portion of the chain corresponds to Phe-972–Lys-998.

This sequence belongs to the cation transport ATPase (P-type) (TC 3.A.3) family. Type IIA subfamily. In terms of tissue distribution, expressed in root cap, in elongation and differentiation zones of roots, in vascular tissues of roots, leaves, floral pedicels and style, in leaves, including hydathodes and guard cells, in stamens, in petals, in sepals and in siliques.

The protein localises to the golgi apparatus membrane. Its subcellular location is the endosome membrane. The protein resides in the prevacuolar compartment membrane. The enzyme catalyses Ca(2+)(in) + ATP + H2O = Ca(2+)(out) + ADP + phosphate + H(+). Functionally, this magnesium-dependent enzyme catalyzes the hydrolysis of ATP coupled with the translocation of calcium from the cytosol to an endomembrane compartment. Involved in calcium-enhanced root growth, in tolerance to toxic levels of manganese and in secretory processes. Has a crucial role in manganese nutrition, but is not involved in transporting copper, iron or zinc. This chain is Calcium-transporting ATPase 3, endoplasmic reticulum-type, found in Arabidopsis thaliana (Mouse-ear cress).